The primary structure comprises 350 residues: MEHISGNSPEQVRERSAAVTGAVEESELKLSAVTMVPVESLLPSDSPRSAGEDVEHIRTLAASGAELPAIVVMPTTKRVIDGMHRLRATKMRGATEIAVRYFEGGEEEAFIFAVKSNVTHGLPLSLDDRKAAATRVLETHPSWSDRAIGLATGLSAKTVGTLRSCSTAGVPQSNVRIGRDGRARPLDPTEGRKLASRLLQENPSASLRQIAAQAGVSPSTASDVRKRLSRGESPLPERDRQQEVPAVARTPARVSRADGSWAPHTVALRHLSRDPSVRLTEDGRALLRWLNVVAVRNQDWDRLLGNVPPHCVKVIAELARGCADIWHRVAEELDQAGIDEAAGRSLSDVG.

Over residues 1 to 10 (MEHISGNSPE) the composition is skewed to polar residues. 3 disordered regions span residues 1-20 (MEHI…AAVT), 168-189 (AGVP…LDPT), and 211-258 (AAQA…SRAD). 2 stretches are compositionally biased toward basic and acidic residues: residues 177-189 (IGRD…LDPT) and 223-242 (DVRK…DRQQ).

The polypeptide is Streptomycin biosynthesis operon possible regulatory protein (strR) (Streptomyces griseus).